Reading from the N-terminus, the 124-residue chain is CD59 glycoprotein (124 aa).

Positions 1 to 24 (MTSRGVHLLLRLLFLLAVFYSSDS) are cleaved as a signal peptide. One can recognise a UPAR/Ly6 domain in the interval 25-101 (SLMCYHCLLP…DLCNGPEDDG (77 aa)). 5 disulfides stabilise this stretch: Cys-28–Cys-51, Cys-31–Cys-38, Cys-44–Cys-64, Cys-70–Cys-88, and Cys-89–Cys-94. Asn-37 is a glycosylation site (N-linked (GlcNAc...) asparagine). Gly-101 is lipidated: GPI-anchor amidated glycine. The propeptide at 102–124 (TALTGRTVLLVAPLLAAARNLCL) is removed in mature form.

In terms of assembly, interacts with T-cell surface antigen CD2. N- and O-glycosylated.

Its subcellular location is the cell membrane. It localises to the secreted. Potent inhibitor of the complement membrane attack complex (MAC) action, which protects self-cells from damage during complement activation. Acts by binding to the beta-haipins of C8 (C8A and C8B) components of the assembling MAC, forming an intermolecular beta-sheet that prevents incorporation of the multiple copies of C9 required for complete formation of the osmolytic pore. The chain is CD59 glycoprotein from Oryctolagus cuniculus (Rabbit).